Reading from the N-terminus, the 445-residue chain is Ubiquitin carboxyl-terminal hydrolase MINDY-3 (445 aa).

Cys-51 functions as the Nucleophile in the catalytic mechanism. Phosphoserine is present on Ser-125. The Proton acceptor role is filled by His-287.

It belongs to the MINDY deubiquitinase family. FAM188 subfamily. Interacts with COPS5. In terms of tissue distribution, widely expressed with high levels in heart, skeletal muscle, and kidney, and low levels in liver and brain. Also expressed in lung (at protein level).

The protein resides in the nucleus. The catalysed reaction is Thiol-dependent hydrolysis of ester, thioester, amide, peptide and isopeptide bonds formed by the C-terminal Gly of ubiquitin (a 76-residue protein attached to proteins as an intracellular targeting signal).. In terms of biological role, hydrolase that can remove 'Lys-48'-linked conjugated ubiquitin from proteins. The chain is Ubiquitin carboxyl-terminal hydrolase MINDY-3 from Homo sapiens (Human).